Reading from the N-terminus, the 62-residue chain is Photosystem II reaction center protein Z (62 aa).

2 consecutive transmembrane segments (helical) span residues 8 to 28 (SVFA…VVLA) and 41 to 61 (FSGA…NSLI).

The protein belongs to the PsbZ family. In terms of assembly, PSII is composed of 1 copy each of membrane proteins PsbA, PsbB, PsbC, PsbD, PsbE, PsbF, PsbH, PsbI, PsbJ, PsbK, PsbL, PsbM, PsbT, PsbY, PsbZ, Psb30/Ycf12, at least 3 peripheral proteins of the oxygen-evolving complex and a large number of cofactors. It forms dimeric complexes.

Its subcellular location is the plastid. It is found in the chloroplast thylakoid membrane. Its function is as follows. May control the interaction of photosystem II (PSII) cores with the light-harvesting antenna, regulates electron flow through the 2 photosystem reaction centers. PSII is a light-driven water plastoquinone oxidoreductase, using light energy to abstract electrons from H(2)O, generating a proton gradient subsequently used for ATP formation. The chain is Photosystem II reaction center protein Z from Psilotum nudum (Whisk fern).